We begin with the raw amino-acid sequence, 240 residues long: Chloroplastic group IIB intron splicing facilitator CRS2-B, chloroplastic (240 aa).

Belongs to the PTH family. CRS2 subfamily. In terms of assembly, part of large ribonucleo-protein complexes that include group IIB introns and either CAF1 or CAF2.

It localises to the plastid. The protein resides in the chloroplast stroma. Functionally, required for the splicing of group IIB introns in chloroplasts. In Arabidopsis thaliana (Mouse-ear cress), this protein is Chloroplastic group IIB intron splicing facilitator CRS2-B, chloroplastic (CRS2B).